We begin with the raw amino-acid sequence, 347 residues long: S-adenosylmethionine:tRNA ribosyltransferase-isomerase (347 aa).

The protein belongs to the QueA family. As to quaternary structure, monomer.

The protein localises to the cytoplasm. It catalyses the reaction 7-aminomethyl-7-carbaguanosine(34) in tRNA + S-adenosyl-L-methionine = epoxyqueuosine(34) in tRNA + adenine + L-methionine + 2 H(+). It participates in tRNA modification; tRNA-queuosine biosynthesis. Functionally, transfers and isomerizes the ribose moiety from AdoMet to the 7-aminomethyl group of 7-deazaguanine (preQ1-tRNA) to give epoxyqueuosine (oQ-tRNA). This chain is S-adenosylmethionine:tRNA ribosyltransferase-isomerase, found in Gluconobacter oxydans (strain 621H) (Gluconobacter suboxydans).